The chain runs to 133 residues: Small ribosomal subunit protein uS8 (133 aa).

It belongs to the universal ribosomal protein uS8 family. Part of the 30S ribosomal subunit. Contacts proteins S5 and S12.

In terms of biological role, one of the primary rRNA binding proteins, it binds directly to 16S rRNA central domain where it helps coordinate assembly of the platform of the 30S subunit. The chain is Small ribosomal subunit protein uS8 from Prochlorococcus marinus (strain MIT 9301).